Here is a 187-residue protein sequence, read N- to C-terminus: 1,6-anhydro-N-acetylmuramyl-L-alanine amidase AmpD (187 aa).

Residues 29–167 (SLLVVHNISL…TPDRKTDPGP (139 aa)) form the N-acetylmuramoyl-L-alanine amidase domain. Residue histidine 34 participates in Zn(2+) binding. Glutamate 116 (proton acceptor) is an active-site residue. Residues histidine 154 and aspartate 164 each coordinate Zn(2+).

It belongs to the N-acetylmuramoyl-L-alanine amidase 2 family. Zn(2+) is required as a cofactor.

The protein resides in the cytoplasm. The enzyme catalyses Hydrolyzes the link between N-acetylmuramoyl residues and L-amino acid residues in certain cell-wall glycopeptides.. Involved in cell wall peptidoglycan recycling. Specifically cleaves the amide bond between the lactyl group of N-acetylmuramic acid and the alpha-amino group of the L-alanine in degradation products containing an anhydro N-acetylmuramyl moiety. This is 1,6-anhydro-N-acetylmuramyl-L-alanine amidase AmpD (ampD) from Salmonella typhimurium (strain LT2 / SGSC1412 / ATCC 700720).